Reading from the N-terminus, the 97-residue chain is Apolipoprotein C-II (97 aa).

An N-terminal signal peptide occupies residues Met-1–Gly-22. The tract at residues Ser-63 to Met-71 is lipid binding. The tract at residues Ser-75–Glu-97 is lipoprotein lipase cofactor.

Belongs to the apolipoprotein C2 family. In terms of processing, proapolipoprotein C-II is synthesized as a sialic acid containing glycoprotein which is subsequently desialylated prior to its proteolytic processing. Proapolipoprotein C-II, the major form found in plasma undergoes proteolytic cleavage of its N-terminal hexapeptide to generate the mature form apolipoprotein C-II, which occurs as the minor form in plasma.

Its subcellular location is the secreted. Its function is as follows. Component of chylomicrons, very low-density lipoproteins (VLDL), low-density lipoproteins (LDL), and high-density lipoproteins (HDL) in plasma. Plays an important role in lipoprotein metabolism as an activator of lipoprotein lipase. The protein is Apolipoprotein C-II (Apoc2) of Rattus norvegicus (Rat).